A 374-amino-acid chain; its full sequence is Phospho-2-dehydro-3-deoxyheptonate aldolase AMT16 (374 aa).

The protein belongs to the class-I DAHP synthase family.

The catalysed reaction is D-erythrose 4-phosphate + phosphoenolpyruvate + H2O = 7-phospho-2-dehydro-3-deoxy-D-arabino-heptonate + phosphate. It functions in the pathway mycotoxin biosynthesis. Its function is as follows. Nonribosomal peptide synthetase; part of the gene clusters that mediate the biosynthesis of AM-toxins, host-selective toxins (HSTs) causing Alternaria blotch on apple, a worldwide distributed disease. AM-toxins are cyclic depsipeptides containing the 3 residues 2-hydroxy-isovaleric acid (2-HIV), dehydroalanine, L-alanine which are common for all 3 AM-toxins I to III. The fourth precursor is L-alpha-amino-methoxyphenyl-valeric acid (L-Amv) for AM-toxin I, L-alpha-amino-phenyl-valeric acid (L-Apv) for AM-toxin II, and L-alpha-amino-hydroxyphenyl-valeric acid (L-Ahv) for AM-toxin III. AM-toxins have two target sites for affecting susceptible apple cells; they cause invagination of the plasma membrane and electrolyte loss and chloroplast disorganization. The non-ribosomal peptide synthetase AMT1 contains 4 catalytic modules and is responsible for activation of each residue in AM-toxin. The aldo-keto reductase AMT2 catalyzes the conversion of 2-keto-isovaleric acid (2-KIV) to 2-hydroxy-isovaleric acid (2-HIV), one of the precursor residues incorporated by AMT1 during AM-toxin biosynthesis, by reduction of its ketone to an alcohol. The cytochrome P450 monooxygenase AMT3 and the thioesterase AMT4 are also important for AM-toxin production, but their exact function within the AM-toxin biosynthesis are not known yet. Up to 21 proteins (including AMT1 to AMT4) are predicted to be involved in AM-toxin biosynthesis since their expression ishighly up-regulated in AM-toxin-producing cultures. This chain is Phospho-2-dehydro-3-deoxyheptonate aldolase AMT16, found in Alternaria alternata (Alternaria rot fungus).